The following is a 317-amino-acid chain: MGRPPCCDKSNVKKGLWTEEEDAKILAYVAIHGVGNWSLIPKKAGLNRCGKSCRLRWTNYLRPDLKHDSFSTQEEELIIECHRAIGSRWSSIARKLPGRTDNDVKNHWNTKLKKKLMKMGIDPVTHKPVSQLLAEFRNISGHGNASFKTEPSNNSILTQSNSAWEMMRNTTTNHESYYTNSPMMFTNSSEYQTTPFHFYSHPNHLLNGTTSSCSSSSSSTSITQPNQVPQTPVTNFYWSDFLLSDPVPQVVGSSATSDLTFTQNEHHFNIEAEYISQNIDSKASGTCHSASSFVDEILDKDQEMLSQFPQLLNDFDY.

HTH myb-type domains are found at residues K9–L65 and K66–L116. 2 consecutive DNA-binding regions (H-T-H motif) follow at residues W37–L61 and W89–L112.

Inflorescences-specific. Accumulates in anthers, especially in tapetum and meiocytes/microsporocytes and microspores during anther development.

It is found in the nucleus. Functionally, required for anther development and early tapetal function during microspore maturation. Regulates callose dissolution required for microspores release from the tetrads. This Arabidopsis thaliana (Mouse-ear cress) protein is Transcription factor MYB35.